The following is a 125-amino-acid chain: Large ribosomal subunit protein bL21 (125 aa).

The span at Phe-75–His-89 shows a compositional bias: basic residues. 2 disordered regions span residues Phe-75–Thr-94 and Ala-103–Ala-125. Low complexity predominate over residues Ala-106 to Ala-125.

The protein belongs to the bacterial ribosomal protein bL21 family. In terms of assembly, part of the 50S ribosomal subunit. Contacts protein L20.

Its function is as follows. This protein binds to 23S rRNA in the presence of protein L20. This Methylocella silvestris (strain DSM 15510 / CIP 108128 / LMG 27833 / NCIMB 13906 / BL2) protein is Large ribosomal subunit protein bL21.